Here is a 200-residue protein sequence, read N- to C-terminus: Phospholipase A2 inhibitor LNF1 (200 aa).

The first 19 residues, 1 to 19 (MKYLHTICLLFIFVARGNS), serve as a signal peptide directing secretion. Cystine bridges form between Cys22–Cys46, Cys25–Cys32, Cys39–Cys67, Cys73–Cys94, Cys95–Cys100, Cys118–Cys143, Cys136–Cys165, and Cys169–Cys191. An N-linked (GlcNAc...) asparagine glycan is attached at Asn176.

Belongs to the CNF-like-inhibitor family. Occurs as a mixture of oligomers. Tetrameric arrangement appears to be the predominant quaternary structure. In terms of tissue distribution, expressed by the liver.

The protein localises to the secreted. Inhibits the enzymatic activity of phospholipase A2 (PA2). The protein is Phospholipase A2 inhibitor LNF1 of Lachesis muta muta (Bushmaster).